The following is a 459-amino-acid chain: Sorting nexin-8 (459 aa).

The segment at 1 to 53 (MTGGAMDPLPTAPGAAAAEAEVDEEADPPAADSPVPPVSEPRAPDAGQMQVPP) is disordered. One can recognise a PX domain in the interval 68-176 (ARDAVQVELV…KLFLSFSGPD (109 aa)). Arg104, Lys130, and Arg143 together coordinate a 1,2-diacyl-sn-glycero-3-phospho-(1D-myo-inositol-3-phosphate).

Belongs to the sorting nexin family.

It localises to the early endosome membrane. In terms of biological role, may be involved in several stages of intracellular trafficking. May play a role in intracellular protein transport from early endosomes to the trans-Golgi network. The chain is Sorting nexin-8 (SNX8) from Bos taurus (Bovine).